A 472-amino-acid polypeptide reads, in one-letter code: uncharacterized protein (472 aa).

The protein to B.subtilis YcdC.

This is an uncharacterized protein from Bacillus subtilis (strain 168).